Here is a 1030-residue protein sequence, read N- to C-terminus: Kinesin-related protein 6 (1030 aa).

The SAM domain occupies 3 to 66 (FENDQLYNWL…FHLLQQLKKQ (64 aa)). 2 disordered regions span residues 66 to 164 (QTPP…SDFM) and 178 to 308 (RQQY…EDDD). Positions 68-80 (PPISNTSSPVINS) are enriched in polar residues. 4 stretches are compositionally biased toward low complexity: residues 81-117 (NNNN…NNNN), 125-164 (TSTS…SDFM), 181-197 (YAKQ…KYQS), and 225-238 (QQQQ…QQQD). The span at 239 to 290 (FEFEEEEEEEDQQQQYDEEEEEEEEYEEDFYKEDLGEIDDGNVLDISDDEPD) shows a compositional bias: acidic residues. The Kinesin motor domain maps to 453–775 (RIRVCVRKRP…LRYADRVKEL (323 aa)). 543–550 (GQTGSGKT) is a binding site for ATP. 3 stretches are compositionally biased toward low complexity: residues 826 to 839 (INSQ…TSQP), 849 to 906 (QQQE…QTQP), and 981 to 1009 (PIQQ…QTPQ). Disordered stretches follow at residues 826 to 915 (INSQ…KIDF) and 981 to 1030 (PIQQ…SSRN).

The protein belongs to the TRAFAC class myosin-kinesin ATPase superfamily. Kinesin family.

Its subcellular location is the cytoplasm. The protein localises to the cytoskeleton. In terms of biological role, microtubule-associated force-producing protein that plays a role in organelle transport. Its motor activity is directed toward the microtubule's plus end. This chain is Kinesin-related protein 6 (kif6), found in Dictyostelium discoideum (Social amoeba).